The following is a 405-amino-acid chain: Aspartokinase (405 aa).

Position 7–10 (7–10 (KYGG)) interacts with ATP. Substrate is bound at residue 25-30 (RIAHYR). An ATP-binding site is contributed by Ser41. Residues 47-49 (TDE), Glu74, 125-126 (LD), 150-153 (RGGS), and Ser153 contribute to the substrate site. ATP contacts are provided by residues 173–174 (TD), 179–184 (YTTDPH), and Arg209. ACT domains follow at residues 263-342 (IGLI…IAKV) and 344-405 (IVGV…LDKA). Residues Asp270, 274-275 (IA), 288-290 (AVD), Gln294, 355-356 (VP), 369-370 (NI), and 376-377 (SE) each bind substrate.

This sequence belongs to the aspartokinase family. In terms of assembly, heterotetramer consisting of 2 isoforms Alpha (catalytic and regulation) and of a homodimer of 2 isoforms Beta (regulation and thermostability).

The catalysed reaction is L-aspartate + ATP = 4-phospho-L-aspartate + ADP. The protein operates within amino-acid biosynthesis; L-lysine biosynthesis via DAP pathway; (S)-tetrahydrodipicolinate from L-aspartate: step 1/4. Its pathway is amino-acid biosynthesis; L-methionine biosynthesis via de novo pathway; L-homoserine from L-aspartate: step 1/3. It functions in the pathway amino-acid biosynthesis; L-threonine biosynthesis; L-threonine from L-aspartate: step 1/5. Inhibited by threonine. Functionally, catalyzes the phosphorylation of the beta-carboxyl group of aspartic acid with ATP to yield 4-phospho-L-aspartate, which is involved in the branched biosynthetic pathway leading to the biosynthesis of amino acids threonine, isoleucine and methionine. The polypeptide is Aspartokinase (ask) (Thermus thermophilus).